The sequence spans 413 residues: Gamma-glutamyl phosphate reductase (413 aa).

The protein belongs to the gamma-glutamyl phosphate reductase family.

Its subcellular location is the cytoplasm. The catalysed reaction is L-glutamate 5-semialdehyde + phosphate + NADP(+) = L-glutamyl 5-phosphate + NADPH + H(+). It functions in the pathway amino-acid biosynthesis; L-proline biosynthesis; L-glutamate 5-semialdehyde from L-glutamate: step 2/2. Catalyzes the NADPH-dependent reduction of L-glutamate 5-phosphate into L-glutamate 5-semialdehyde and phosphate. The product spontaneously undergoes cyclization to form 1-pyrroline-5-carboxylate. The protein is Gamma-glutamyl phosphate reductase of Thermus thermophilus (strain ATCC 27634 / DSM 579 / HB8).